A 228-amino-acid chain; its full sequence is Lipoprotein-releasing system ATP-binding protein LolD (228 aa).

The ABC transporter domain occupies 6-228 (IKCINLNKSY…ENNQIFNYES (223 aa)). Residue 42–49 (GKSGSGKT) participates in ATP binding.

Belongs to the ABC transporter superfamily. Lipoprotein translocase (TC 3.A.1.125) family.

It localises to the cell inner membrane. Usually LolD forms an ABC transporter complex with LolC and LolE involved in the translocation of lipoprotein, in an ATP-dependent manner. However, LolE is certainly not functional as it is frameshifted. This is Lipoprotein-releasing system ATP-binding protein LolD from Buchnera aphidicola subsp. Acyrthosiphon pisum (strain APS) (Acyrthosiphon pisum symbiotic bacterium).